Here is a 134-residue protein sequence, read N- to C-terminus: Ribosome-binding factor A (134 aa).

Residues 115-134 (EDQRQERGEIPPGSDELQPD) are disordered.

This sequence belongs to the RbfA family. Monomer. Binds 30S ribosomal subunits, but not 50S ribosomal subunits or 70S ribosomes.

The protein resides in the cytoplasm. In terms of biological role, one of several proteins that assist in the late maturation steps of the functional core of the 30S ribosomal subunit. Associates with free 30S ribosomal subunits (but not with 30S subunits that are part of 70S ribosomes or polysomes). Required for efficient processing of 16S rRNA. May interact with the 5'-terminal helix region of 16S rRNA. In Synechococcus sp. (strain CC9902), this protein is Ribosome-binding factor A.